We begin with the raw amino-acid sequence, 182 residues long: Transmembrane and coiled-coil domain-containing protein 2 (182 aa).

The next 2 helical transmembrane spans lie at 10–30 (IIID…TLLG) and 50–70 (VQVI…YALW). A coiled-coil region spans residues 122-149 (GLQEKILKKLQTVENKVKDLEGMIISQK).

It localises to the membrane. This chain is Transmembrane and coiled-coil domain-containing protein 2 (TMCO2), found in Bos taurus (Bovine).